Reading from the N-terminus, the 2115-residue chain is Non-reducing polyketide synthase PFUR17_0229 (2115 aa).

Residues 8-246 (VLFGDQTVDP…ISLPITAAFH (239 aa)) are N-terminal acylcarrier protein transacylase (SAT) domain (SAT). The Ketosynthase family 3 (KS3) domain occupies 367–796 (SGDIAIVGVA…GGNTSLVLED (430 aa)). Residues C539, H674, and H713 each act as for beta-ketoacyl synthase activity in the active site. Residues 895–1218 (IFAFTGQGAQ…SISNAYNSGA (324 aa)) form a malonyl-CoA:ACP transacylase (MAT) domain region. Residues 1279 to 1592 (TTCLQKVESE…KRNILQSLLS (314 aa)) form a product template (PT) domain region. An N-terminal hotdog fold region spans residues 1282-1413 (LQKVESETFT…CTVMYGDGQQ (132 aa)). Positions 1282–1588 (LQKVESETFT…FQKMKRNILQ (307 aa)) constitute a PKS/mFAS DH domain. Residue H1315 is the Proton acceptor; for dehydratase activity of the active site. The tract at residues 1441 to 1588 (VHRLLKEMIY…FQKMKRNILQ (148 aa)) is C-terminal hotdog fold. Catalysis depends on D1501, which acts as the Proton donor; for dehydratase activity. The tract at residues 1594–1613 (GHEETPPARPVPSKRTVQGS) is disordered. The region spanning 1626–1703 (KAASGGFSNI…QLRNFFLDKV (78 aa)) is the Carrier 1 domain. S1663 carries the post-translational modification O-(pantetheine 4'-phosphoryl)serine. A disordered region spans residues 1710-1742 (FDDEESEMSSSTAGSTPGSSTSHGNQNTTVTTP). Residues 1718-1733 (SSSTAGSTPGSSTSHG) are compositionally biased toward low complexity. Residues 1742 to 1819 (PAEPDVVAIL…DVQKALGVPS (78 aa)) enclose the Carrier 2 domain. S1779 carries the O-(pantetheine 4'-phosphoryl)serine modification. Residues 1861–2097 (LFLLPDGAGS…VVGGNHFSIM (237 aa)) form a thioesterase (TE) domain region.

The cofactor is pantetheine 4'-phosphate.

The catalysed reaction is 6 malonyl-CoA + 2 acetyl-CoA + 5 H(+) = o-orsellinate depside + 6 CO2 + 8 CoA + H2O. Functionally, non-reducing polyketide synthase; part of a gene cluster that mediates the biosynthesis of a yet unidentified depside/depsidone compound. The first step in the pathway is performed by the PKS PFUR17_0229 that condenses 2 acetyl-CoA starter units with 6 malonyl-CoA units to produce lecanoric acid (LA), also known as orsellinate depside. The biosynthesis occurs via the formation of 2 orsellinate intermediates fused together by the C-terminal thioesterase (TE) domain that finally releases lecanoric acid. In addition to the PKS gene, the PFUR17 gene cluster contains closely linked genes encoding a cytochrome P-450 and a laccase (phenol oxidase), directly upstream and downstream respectively, so it is likely that lecanoric acid is an intermediate in a longer biosynthetic pathway. The protein is Non-reducing polyketide synthase PFUR17_0229 of Pseudevernia furfuracea (Tree moss).